The primary structure comprises 477 residues: Cytochrome c oxidase subunit 1 (477 aa).

A helical transmembrane segment spans residues 16 to 36 (VGTMYLMLGMWSGFGGLNLSW). Ca(2+) is bound by residues Glu41 and Gly46. Position 62 (His62) interacts with Fe(II)-heme a. The next 6 membrane-spanning stretches (helical) occupy residues 64–84 (IMMIFSFVMPVLIGGFGNWLL), 101–121 (FSFWVLPPALYLVIVSCFIDY), 149–171 (ILGLHLAGISSSAESINYLVTFL), 185–205 (LFVWALAVTSFLLLVSLPVLA), 236–256 (LFWFFGHPEVYVLILPGFGLV), and 269–289 (VFGSVAMMYAMISIGVLGFIV). His242 provides a ligand contact to Cu cation. The segment at residues 242-246 (HPEVY) is a cross-link (1'-histidyl-3'-tyrosine (His-Tyr)). Tyr246 lines the O2 pocket. Cu cation-binding residues include His292 and His293. Transmembrane regions (helical) follow at residues 309–329 (AVTMLIAVPTGVKVFSWIATI) and 340–360 (TLWVLGFIMKFTMGGITGVIL). Mg(2+)-binding residues include His370 and Asp371. Residue His378 participates in heme a3 binding. His380 is a Fe(II)-heme a binding site. Helical transmembrane passes span 382–402 (VLSMGAVFTIFAGYIHYFPFF) and 416–436 (FFLTFVGVNLTFFPQHFLGLG). Pro443 provides a ligand contact to Ca(2+). Residues 455–475 (WSTIGCAMVMVSVSLFIHMQW) traverse the membrane as a helical segment.

The protein belongs to the heme-copper respiratory oxidase family. As to quaternary structure, component of the cytochrome c oxidase (complex IV, CIV), a multisubunit enzyme composed of a catalytic core of 3 subunits and several supernumerary subunits. The complex exists as a monomer or a dimer and forms supercomplexes (SCs) in the inner mitochondrial membrane with ubiquinol-cytochrome c oxidoreductase (cytochrome b-c1 complex, complex III, CIII). Requires heme as cofactor. Cu cation is required as a cofactor.

It localises to the mitochondrion inner membrane. It carries out the reaction 4 Fe(II)-[cytochrome c] + O2 + 8 H(+)(in) = 4 Fe(III)-[cytochrome c] + 2 H2O + 4 H(+)(out). Its pathway is energy metabolism; oxidative phosphorylation. Its function is as follows. Component of the cytochrome c oxidase, the last enzyme in the mitochondrial electron transport chain which drives oxidative phosphorylation. The respiratory chain contains 3 multisubunit complexes succinate dehydrogenase (complex II, CII), ubiquinol-cytochrome c oxidoreductase (cytochrome b-c1 complex, complex III, CIII) and cytochrome c oxidase (complex IV, CIV), that cooperate to transfer electrons derived from NADH and succinate to molecular oxygen, creating an electrochemical gradient over the inner membrane that drives transmembrane transport and the ATP synthase. Cytochrome c oxidase is the component of the respiratory chain that catalyzes the reduction of oxygen to water. Electrons originating from reduced cytochrome c in the intermembrane space (IMS) are transferred via the dinuclear copper A center (CU(A)) of subunit 2 and heme A of subunit 1 to the active site in subunit 1, a binuclear center (BNC) formed by heme A3 and copper B (CU(B)). The BNC reduces molecular oxygen to 2 water molecules using 4 electrons from cytochrome c in the IMS and 4 protons from the mitochondrial matrix. This chain is Cytochrome c oxidase subunit 1 (COI), found in Pecten maximus (King scallop).